The following is a 349-amino-acid chain: MGIKGLTKLLADNAPDSMKEQKFESYFGRKIAIDASMSIYSFLVVVGRTGTDMLTNDAGEVTSHLIGMFNRTIRVLEAGLKPVYVFDGKPPEMKGGELAKRLARREEAVESLATAKLEGNEADMEKYSKRTVKVTKQHNEDCRKLLRLMGVPVVEAPSEAEAECASLCKTGKVYAVASEDMDSLTFGSTRFLRHLMEPVSRKLPVMEFDMNKVLEGLSLTMDQFVDLCILCGCDYIDTIRGIGAQTALKLIRQHGSLEKILENLNKDRYQIPDPWPYEEARRLFKEPLVTQAEDVPDFKWTAPDAEGLIKFLVEENGFNHDRVQTAIKKIQLAKNKSSQGRFVNCLCRL.

Residues 1–105 are N-domain; it reads MGIKGLTKLL…GELAKRLARR (105 aa). Aspartate 34 is a binding site for Mg(2+). Arginine 71 contacts DNA. Aspartate 87, glutamate 159, glutamate 161, aspartate 180, and aspartate 182 together coordinate Mg(2+). The interval 123-254 is I-domain; it reads DMEKYSKRTV…QTALKLIRQH (132 aa). Glutamate 159 contributes to the DNA binding site. DNA-binding residues include glycine 232 and aspartate 234. Aspartate 234 contacts Mg(2+).

This sequence belongs to the XPG/RAD2 endonuclease family. FEN1 subfamily. In terms of assembly, interacts with PCNA. Three molecules of FEN1 bind to one PCNA trimer with each molecule binding to one PCNA monomer. PCNA stimulates the nuclease activity without altering cleavage specificity. Mg(2+) is required as a cofactor. In terms of processing, phosphorylated. Phosphorylation upon DNA damage induces relocalization to the nuclear plasma.

It is found in the nucleus. The protein localises to the nucleolus. Its subcellular location is the nucleoplasm. It localises to the mitochondrion. In terms of biological role, structure-specific nuclease with 5'-flap endonuclease and 5'-3' exonuclease activities involved in DNA replication and repair. During DNA replication, cleaves the 5'-overhanging flap structure that is generated by displacement synthesis when DNA polymerase encounters the 5'-end of a downstream Okazaki fragment. It enters the flap from the 5'-end and then tracks to cleave the flap base, leaving a nick for ligation. Also involved in the long patch base excision repair (LP-BER) pathway, by cleaving within the apurinic/apyrimidinic (AP) site-terminated flap. Acts as a genome stabilization factor that prevents flaps from equilibrating into structures that lead to duplications and deletions. Also possesses 5'-3' exonuclease activity on nicked or gapped double-stranded DNA, and exhibits RNase H activity. Also involved in replication and repair of rDNA and in repairing mitochondrial DNA. The protein is Flap endonuclease 1-B of Physcomitrium patens (Spreading-leaved earth moss).